Reading from the N-terminus, the 299-residue chain is Very long chain fatty acid elongase 5 (299 aa).

An N-acetylmethionine modification is found at Met-1. 7 consecutive transmembrane segments (helical) span residues 26 to 46, 64 to 84, 112 to 132, 139 to 158, 168 to 187, 205 to 225, and 227 to 247; these read WFLLDNYIPTFVCSAIYLLIV, ILVVYNLGLTLLSLYMFYELV, VLWWYYFSKLIEFMDTFFFIL, ITVLHVYHHATMLNIWWFVM, FGATLNSFIHVLMYSYYGLS, GQLVQFVLTIIQTSCGVIWPC, and FPLGWLYFQIGYMISLIALFT.

This sequence belongs to the ELO family. ELOVL5 subfamily. Interacts with TECR. As to expression, highly expressed in lung and brain.

It is found in the endoplasmic reticulum membrane. The protein localises to the cell projection. The protein resides in the dendrite. The catalysed reaction is a very-long-chain acyl-CoA + malonyl-CoA + H(+) = a very-long-chain 3-oxoacyl-CoA + CO2 + CoA. The enzyme catalyses (6Z,9Z,12Z,15Z)-octadecatetraenoyl-CoA + malonyl-CoA + H(+) = (8Z,11Z,14Z,17Z)-3-oxoicosatetraenoyl-CoA + CO2 + CoA. It catalyses the reaction (6Z,9Z,12Z)-octadecatrienoyl-CoA + malonyl-CoA + H(+) = (8Z,11Z,14Z)-3-oxoeicosatrienoyl-CoA + CO2 + CoA. It carries out the reaction (5Z,8Z,11Z,14Z,17Z)-eicosapentaenoyl-CoA + malonyl-CoA + H(+) = 3-oxo-(7Z,10Z,13Z,16Z,19Z)-docosapentaenoyl-CoA + CO2 + CoA. The catalysed reaction is (5Z,8Z,11Z,14Z)-eicosatetraenoyl-CoA + malonyl-CoA + H(+) = (7Z,10Z,13Z,16Z)-3-oxodocosatetraenoyl-CoA + CO2 + CoA. The enzyme catalyses (9Z,12Z,15Z)-octadecatrienoyl-CoA + malonyl-CoA + H(+) = (11Z,14Z,17Z)-3-oxoeicosatrienoyl-CoA + CO2 + CoA. It catalyses the reaction (9Z)-hexadecenoyl-CoA + malonyl-CoA + H(+) = 3-oxo-(11Z)-octadecenoyl-CoA + CO2 + CoA. It carries out the reaction (9Z)-octadecenoyl-CoA + malonyl-CoA + H(+) = 3-oxo-(11Z)-eicosenoyl-CoA + CO2 + CoA. The catalysed reaction is (11Z)-octadecenoyl-CoA + malonyl-CoA + H(+) = 3-oxo-(13Z)-eicosenoyl-CoA + CO2 + CoA. The enzyme catalyses (9Z,12Z)-octadecadienoyl-CoA + malonyl-CoA + H(+) = (11Z,14Z)-3-oxoicosa-11,14-dienoyl-CoA + CO2 + CoA. It functions in the pathway lipid metabolism; polyunsaturated fatty acid biosynthesis. Its function is as follows. Catalyzes the first and rate-limiting reaction of the four reactions that constitute the long-chain fatty acids elongation cycle. This endoplasmic reticulum-bound enzymatic process allows the addition of 2 carbons to the chain of long- and very long-chain fatty acids (VLCFAs) per cycle. Condensing enzyme that acts specifically toward polyunsaturated acyl-CoA with the higher activity toward C18:3(n-6) acyl-CoA. May participate in the production of monounsaturated and of polyunsaturated VLCFAs of different chain lengths that are involved in multiple biological processes as precursors of membrane lipids and lipid mediators. In conditions where the essential linoleic and alpha linoleic fatty acids are lacking it is also involved in the synthesis of Mead acid from oleic acid. The protein is Very long chain fatty acid elongase 5 of Rattus norvegicus (Rat).